Consider the following 508-residue polypeptide: Argininosuccinate lyase (508 aa).

This sequence belongs to the lyase 1 family. Argininosuccinate lyase subfamily.

It localises to the cytoplasm. The catalysed reaction is 2-(N(omega)-L-arginino)succinate = fumarate + L-arginine. It functions in the pathway amino-acid biosynthesis; L-arginine biosynthesis; L-arginine from L-ornithine and carbamoyl phosphate: step 3/3. The protein is Argininosuccinate lyase of Methanopyrus kandleri (strain AV19 / DSM 6324 / JCM 9639 / NBRC 100938).